A 225-amino-acid chain; its full sequence is Cytidylate kinase (225 aa).

ATP is bound at residue Gly-11–Thr-19.

The protein belongs to the cytidylate kinase family. Type 1 subfamily.

The protein localises to the cytoplasm. It catalyses the reaction CMP + ATP = CDP + ADP. It carries out the reaction dCMP + ATP = dCDP + ADP. The polypeptide is Cytidylate kinase (Lawsonia intracellularis (strain PHE/MN1-00)).